We begin with the raw amino-acid sequence, 346 residues long: MLTERQSMILKYIIDDYSKTGVPIGSKALAEQLPIHVSSATIRNEMAVLSHQNFIEKLHTSSGRVPSNQGYRYYIDNLAKPAKLDTKRLEYISEMLDGSFQQIDEIVRQSADILSHLTDYTALTFSPELTTENTIKHLQLVNLGLNRMMVVIVMGNEQVESQSFLVTNQYIDSQLSLATNLLNQQLVGKTAREVKQVFQSKILTELHTYLPDTKQFVRAIQAILSKIDDDHYFISGQMNMFEQNGKQDFSKIKSLYSMFNNDNGIDALLEKSSKPISVKIGAEFDNDWLKDYSIITGSYDLGNHGIGRIALIGPMRMSYPNMLGVVDAFRHELKNRISGYYRSYDQ.

The protein belongs to the HrcA family.

Its function is as follows. Negative regulator of class I heat shock genes (grpE-dnaK-dnaJ and groELS operons). Prevents heat-shock induction of these operons. This chain is Heat-inducible transcription repressor HrcA, found in Fructilactobacillus sanfranciscensis (Lactobacillus sanfranciscensis).